The sequence spans 221 residues: Urease accessory protein UreE (221 aa).

Basic and acidic residues predominate over residues 171 to 180; the sequence is HHGHDHDHGH. A disordered region spans residues 171 to 221; sequence HHGHDHDHGHSHSHSHSHSHSHSHSHDHDHDHDHEHDVKGHVHGPGCGHKH. Residues 181–193 show a composition bias toward basic residues; the sequence is SHSHSHSHSHSHS. A compositionally biased stretch (basic and acidic residues) spans 194-210; the sequence is HSHDHDHDHDHEHDVKG.

Belongs to the UreE family.

Its subcellular location is the cytoplasm. Functionally, involved in urease metallocenter assembly. Binds nickel. Probably functions as a nickel donor during metallocenter assembly. In Cupriavidus pinatubonensis (strain JMP 134 / LMG 1197) (Cupriavidus necator (strain JMP 134)), this protein is Urease accessory protein UreE.